Reading from the N-terminus, the 62-residue chain is U-stichotoxin-Hau1a (62 aa).

The first 21 residues, methionine 1–glycine 21, serve as a signal peptide directing secretion. Positions phenylalanine 22–arginine 31 are excised as a propeptide. Proline 36 carries the hydroxyproline modification. Disulfide bonds link cysteine 41–cysteine 53 and cysteine 44–cysteine 59.

This sequence belongs to the Hau1a/HC18/HC19 family.

It is found in the secreted. The protein resides in the nematocyst. Its function is as follows. Toxin that is lethal to crab. Does not produce the typical symptoms associated with sodium channel toxins in crabs, suggesting that it likely does not act on sodium channels. The sequence is that of U-stichotoxin-Hau1a from Heteractis aurora (Banded sea anemone).